We begin with the raw amino-acid sequence, 1464 residues long: DNA polymerase III PolC-type (1464 aa).

The region spanning 426–582 is the Exonuclease domain; it reads YVVFDVETTG…YDAEATGRLL (157 aa).

It belongs to the DNA polymerase type-C family. PolC subfamily.

Its subcellular location is the cytoplasm. The catalysed reaction is DNA(n) + a 2'-deoxyribonucleoside 5'-triphosphate = DNA(n+1) + diphosphate. Functionally, required for replicative DNA synthesis. This DNA polymerase also exhibits 3' to 5' exonuclease activity. This Streptococcus thermophilus (strain CNRZ 1066) protein is DNA polymerase III PolC-type.